The primary structure comprises 106 residues: UPF0060 membrane protein R01043 (106 aa).

The next 4 helical transmembrane spans lie at 5-25, 31-51, 61-81, and 85-105; these read AIYFLAALAEITGCFAFWSWL, ALWLIPGMASLALFAWLLTMV, AAYGGVYIVASLSWLWLAEGV, and HWDMTGAAVALAGSAIILAGP.

Belongs to the UPF0060 family.

It localises to the cell inner membrane. This is UPF0060 membrane protein R01043 from Rhizobium meliloti (strain 1021) (Ensifer meliloti).